We begin with the raw amino-acid sequence, 449 residues long: GTPase Der (449 aa).

EngA-type G domains lie at 2-169 (FTVA…QLPP) and 180-355 (VRFC…EQLT). GTP is bound by residues 8 to 15 (GRPNVGKS), 55 to 59 (DTGGL), 118 to 121 (NKSE), 186 to 193 (GKPNVGKS), 233 to 237 (DTAGI), and 298 to 301 (NKWD). Residues 356 to 440 (KKISTSLLND…PITLYFKSKN (85 aa)) form the KH-like domain.

This sequence belongs to the TRAFAC class TrmE-Era-EngA-EngB-Septin-like GTPase superfamily. EngA (Der) GTPase family. In terms of assembly, associates with the 50S ribosomal subunit.

In terms of biological role, GTPase that plays an essential role in the late steps of ribosome biogenesis. This chain is GTPase Der, found in Mycoplasma pneumoniae (strain ATCC 29342 / M129 / Subtype 1) (Mycoplasmoides pneumoniae).